A 596-amino-acid polypeptide reads, in one-letter code: NADH-quinone oxidoreductase subunit C/D (596 aa).

The NADH dehydrogenase I subunit C stretch occupies residues 1–186 (MTDLTAQEPA…SPFELTKAKQ (186 aa)). Residues 210-596 (DFMFLNLGPN…IDFVMSDVDR (387 aa)) are NADH dehydrogenase I subunit D.

It in the N-terminal section; belongs to the complex I 30 kDa subunit family. This sequence in the C-terminal section; belongs to the complex I 49 kDa subunit family. As to quaternary structure, NDH-1 is composed of 13 different subunits. Subunits NuoB, CD, E, F, and G constitute the peripheral sector of the complex.

The protein resides in the cell inner membrane. It catalyses the reaction a quinone + NADH + 5 H(+)(in) = a quinol + NAD(+) + 4 H(+)(out). In terms of biological role, NDH-1 shuttles electrons from NADH, via FMN and iron-sulfur (Fe-S) centers, to quinones in the respiratory chain. The immediate electron acceptor for the enzyme in this species is believed to be ubiquinone. Couples the redox reaction to proton translocation (for every two electrons transferred, four hydrogen ions are translocated across the cytoplasmic membrane), and thus conserves the redox energy in a proton gradient. The protein is NADH-quinone oxidoreductase subunit C/D of Shigella flexneri serotype 5b (strain 8401).